Here is a 129-residue protein sequence, read N- to C-terminus: Glycine cleavage system H protein (129 aa).

In terms of domain architecture, Lipoyl-binding spans 24-106 (AVRIGLSAYA…HGEGWLLVIQ (83 aa)). An N6-lipoyllysine modification is found at K65.

This sequence belongs to the GcvH family. In terms of assembly, the glycine cleavage system is composed of four proteins: P, T, L and H. It depends on (R)-lipoate as a cofactor.

Its function is as follows. The glycine cleavage system catalyzes the degradation of glycine. The H protein shuttles the methylamine group of glycine from the P protein to the T protein. The chain is Glycine cleavage system H protein from Synechococcus sp. (strain WH7803).